Reading from the N-terminus, the 309-residue chain is Probable 3-hydroxyacyl-CoA dehydrogenase B0272.3 (309 aa).

Belongs to the 3-hydroxyacyl-CoA dehydrogenase family. In terms of assembly, homodimer.

It localises to the mitochondrion matrix. The enzyme catalyses a (3S)-3-hydroxyacyl-CoA + NAD(+) = a 3-oxoacyl-CoA + NADH + H(+). Its pathway is lipid metabolism; fatty acid beta-oxidation. This is Probable 3-hydroxyacyl-CoA dehydrogenase B0272.3 from Caenorhabditis elegans.